Reading from the N-terminus, the 221-residue chain is Lipoprotein-releasing system ATP-binding protein LolD (221 aa).

The ABC transporter domain occupies 6-220 (LILKNISKHY…YKLKHGLLNI (215 aa)). An ATP-binding site is contributed by 42–49 (GSSGSGKS).

The protein belongs to the ABC transporter superfamily. Lipoprotein translocase (TC 3.A.1.125) family. The complex is composed of two ATP-binding proteins (LolD) and two transmembrane proteins (LolC and LolE).

It localises to the cell inner membrane. Functionally, part of the ABC transporter complex LolCDE involved in the translocation of mature outer membrane-directed lipoproteins, from the inner membrane to the periplasmic chaperone, LolA. Responsible for the formation of the LolA-lipoprotein complex in an ATP-dependent manner. This is Lipoprotein-releasing system ATP-binding protein LolD from Rickettsia felis (strain ATCC VR-1525 / URRWXCal2) (Rickettsia azadi).